The following is a 77-amino-acid chain: Putative defensin-like protein 30 (77 aa).

An N-terminal signal peptide occupies residues 1–26; the sequence is MASSSKCAFLVFLCMIVLLAPSEVHA. 3 cysteine pairs are disulfide-bonded: Cys43/Cys63, Cys49/Cys72, and Cys53/Cys74.

This sequence belongs to the DEFL family.

The protein localises to the secreted. The sequence is that of Putative defensin-like protein 30 from Arabidopsis thaliana (Mouse-ear cress).